The primary structure comprises 71 residues: Translational regulator CsrA (71 aa).

It belongs to the CsrA/RsmA family. As to quaternary structure, homodimer; the beta-strands of each monomer intercalate to form a hydrophobic core, while the alpha-helices form wings that extend away from the core.

It localises to the cytoplasm. In terms of biological role, a key translational regulator that binds mRNA to regulate translation initiation and/or mRNA stability. Mediates global changes in gene expression, shifting from rapid growth to stress survival by linking envelope stress, the stringent response and the catabolite repression systems. Usually binds in the 5'-UTR; binding at or near the Shine-Dalgarno sequence prevents ribosome-binding, repressing translation, binding elsewhere in the 5'-UTR can activate translation and/or stabilize the mRNA. Its function is antagonized by small RNA(s). The polypeptide is Translational regulator CsrA (Pseudoalteromonas atlantica (strain T6c / ATCC BAA-1087)).